A 346-amino-acid chain; its full sequence is Small ribosomal subunit biogenesis GTPase RsgA (346 aa).

The tract at residues Met-1–Lys-26 is disordered. Residues Thr-7–Lys-20 show a composition bias toward polar residues. The CP-type G domain maps to Glu-103–Phe-271. GTP contacts are provided by residues Asn-159–Asp-162 and Gly-213–Ser-221. Residues Cys-295, Cys-300, His-302, and Cys-308 each contribute to the Zn(2+) site.

This sequence belongs to the TRAFAC class YlqF/YawG GTPase family. RsgA subfamily. In terms of assembly, monomer. Associates with 30S ribosomal subunit, binds 16S rRNA. The cofactor is Zn(2+).

It localises to the cytoplasm. One of several proteins that assist in the late maturation steps of the functional core of the 30S ribosomal subunit. Helps release RbfA from mature subunits. May play a role in the assembly of ribosomal proteins into the subunit. Circularly permuted GTPase that catalyzes slow GTP hydrolysis, GTPase activity is stimulated by the 30S ribosomal subunit. The protein is Small ribosomal subunit biogenesis GTPase RsgA of Haemophilus influenzae (strain 86-028NP).